The sequence spans 317 residues: L-lactate dehydrogenase (317 aa).

NAD(+) contacts are provided by residues valine 17, aspartate 38, lysine 43, tyrosine 69, and 83 to 84 (GA). 2 residues coordinate substrate: glutamine 86 and arginine 92. NAD(+) is bound by residues serine 105, 122–124 (ATN), and serine 147. A substrate-binding site is contributed by 124-127 (NPVD). 152 to 155 (DTAR) contributes to the substrate binding site. Beta-D-fructose 1,6-bisphosphate-binding residues include arginine 157 and histidine 172. Histidine 179 (proton acceptor) is an active-site residue. Tyrosine 224 is subject to Phosphotyrosine. Threonine 233 contacts substrate.

This sequence belongs to the LDH/MDH superfamily. LDH family. Homotetramer.

It is found in the cytoplasm. The enzyme catalyses (S)-lactate + NAD(+) = pyruvate + NADH + H(+). It functions in the pathway fermentation; pyruvate fermentation to lactate; (S)-lactate from pyruvate: step 1/1. With respect to regulation, allosterically activated by fructose 1,6-bisphosphate (FBP). Its function is as follows. Catalyzes the conversion of lactate to pyruvate. The chain is L-lactate dehydrogenase from Bacillus caldotenax.